The chain runs to 157 residues: uncharacterized protein (157 aa).

Residues S42 to F64 form a helical membrane-spanning segment.

The protein localises to the membrane. This is an uncharacterized protein from Saccharomyces cerevisiae (strain ATCC 204508 / S288c) (Baker's yeast).